Consider the following 246-residue polypeptide: Ribonuclease PH (246 aa).

Residues R91 and 129–131 (GTR) each bind phosphate.

It belongs to the RNase PH family. In terms of assembly, homohexameric ring arranged as a trimer of dimers.

It catalyses the reaction tRNA(n+1) + phosphate = tRNA(n) + a ribonucleoside 5'-diphosphate. In terms of biological role, phosphorolytic 3'-5' exoribonuclease that plays an important role in tRNA 3'-end maturation. Removes nucleotide residues following the 3'-CCA terminus of tRNAs; can also add nucleotides to the ends of RNA molecules by using nucleoside diphosphates as substrates, but this may not be physiologically important. Probably plays a role in initiation of 16S rRNA degradation (leading to ribosome degradation) during starvation. The protein is Ribonuclease PH of Paraburkholderia phymatum (strain DSM 17167 / CIP 108236 / LMG 21445 / STM815) (Burkholderia phymatum).